A 235-amino-acid chain; its full sequence is Transmembrane protein 215 (235 aa).

2 helical membrane passes run 12–32 (LVVA…VSGM) and 40–60 (IPLL…IALA). The disordered stretch occupies residues 99 to 158 (SDLESGKGSSDELAKKAGLRGKPSLQGQGELPMASSITTPTPMEEGECQSPGQSGRREET).

Its subcellular location is the membrane. In Bos taurus (Bovine), this protein is Transmembrane protein 215 (TMEM215).